We begin with the raw amino-acid sequence, 522 residues long: Cytochrome P450 9c1 (522 aa).

Residue Cys-464 participates in heme binding.

This sequence belongs to the cytochrome P450 family. It depends on heme as a cofactor.

Its subcellular location is the endoplasmic reticulum membrane. It is found in the microsome membrane. Its function is as follows. May be involved in the metabolism of insect hormones and in the breakdown of synthetic insecticides. This is Cytochrome P450 9c1 (Cyp9c1) from Drosophila melanogaster (Fruit fly).